Consider the following 687-residue polypeptide: Polyphosphate kinase (687 aa).

Position 45 (Asn45) interacts with ATP. Mg(2+) is bound by residues Arg375 and Arg405. His435 serves as the catalytic Phosphohistidine intermediate. ATP is bound by residues Tyr472, Arg568, and His596.

Belongs to the polyphosphate kinase 1 (PPK1) family. Requires Mg(2+) as cofactor. Post-translationally, an intermediate of this reaction is the autophosphorylated ppk in which a phosphate is covalently linked to a histidine residue through a N-P bond.

It carries out the reaction [phosphate](n) + ATP = [phosphate](n+1) + ADP. Functionally, catalyzes the reversible transfer of the terminal phosphate of ATP to form a long-chain polyphosphate (polyP). This chain is Polyphosphate kinase, found in Burkholderia lata (strain ATCC 17760 / DSM 23089 / LMG 22485 / NCIMB 9086 / R18194 / 383).